A 360-amino-acid polypeptide reads, in one-letter code: N-acetylmuramoyl-L-alanine amidase CwlL (360 aa).

Positions 1–39 are cleaved as a signal peptide; the sequence is MVKVVKNFVKVNQYTRPGLKLAGVKGIVMHYTATPGASA. In terms of domain architecture, N-acetylmuramoyl-L-alanine amidase spans 40–154; that stretch reads LNERDYFNGT…DVTNKICPAP (115 aa). A run of 4 repeats spans residues 166-191, 196-259, 265-289, and 291-355. 2 X approximate repeats regions lie at residues 166-289 and 196-355; these read RKKV…KVKS and LKKG…KAKL.

The protein belongs to the N-acetylmuramoyl-L-alanine amidase 2 family.

Its subcellular location is the secreted. It carries out the reaction Hydrolyzes the link between N-acetylmuramoyl residues and L-amino acid residues in certain cell-wall glycopeptides.. This is N-acetylmuramoyl-L-alanine amidase CwlL (cwlL) from Bacillus licheniformis.